We begin with the raw amino-acid sequence, 691 residues long: Elongation factor G (691 aa).

The tr-type G domain occupies 8 to 283 (EDYRNFGIMA…AVVDYLPSPV (276 aa)). GTP-binding positions include 17–24 (AHIDAGKT), 81–85 (DTPGH), and 135–138 (NKMD).

Belongs to the TRAFAC class translation factor GTPase superfamily. Classic translation factor GTPase family. EF-G/EF-2 subfamily.

The protein localises to the cytoplasm. Functionally, catalyzes the GTP-dependent ribosomal translocation step during translation elongation. During this step, the ribosome changes from the pre-translocational (PRE) to the post-translocational (POST) state as the newly formed A-site-bound peptidyl-tRNA and P-site-bound deacylated tRNA move to the P and E sites, respectively. Catalyzes the coordinated movement of the two tRNA molecules, the mRNA and conformational changes in the ribosome. In Methylorubrum populi (strain ATCC BAA-705 / NCIMB 13946 / BJ001) (Methylobacterium populi), this protein is Elongation factor G.